Here is a 299-residue protein sequence, read N- to C-terminus: GTPase Era (299 aa).

The Era-type G domain maps to Arg-5 to Pro-175. The interval Gly-13–Ser-20 is G1. Gly-13–Ser-20 is a GTP binding site. The segment at Gln-39 to His-43 is G2. Positions Asp-60–Gly-63 are G3. Residues Asp-60–Leu-64 and Thr-124–Asp-127 contribute to the GTP site. A G4 region spans residues Thr-124–Asp-127. Residues Val-154–Ala-156 are G5. Residues Val-206–Lys-285 enclose the KH type-2 domain.

Belongs to the TRAFAC class TrmE-Era-EngA-EngB-Septin-like GTPase superfamily. Era GTPase family. Monomer. Stays in the monomer conformation, irrespective of the presence of GTP.

The protein localises to the cell envelope. It localises to the secreted. The protein resides in the cell wall. Co-purified with RNA upon overexpression in E.coli, but RNAs do not appear to influence the GTPase activity. Functionally, exhibits GTPase activity. Binds RNA but is probably not involved in ribosome assembly in mycobacteria. Cannot use ATP. This Mycolicibacterium smegmatis (strain ATCC 700084 / mc(2)155) (Mycobacterium smegmatis) protein is GTPase Era.